A 1503-amino-acid polypeptide reads, in one-letter code: Lysophospholipase NTE1 (1503 aa).

Over 1 to 25 (MDSSTAALATASAKLDAVAQQGSSS) the chain is Cytoplasmic. The helical transmembrane segment at 26–46 (WIGFFANIILGIISLVYSILY) threads the bilayer. The Lumenal portion of the chain corresponds to 47 to 71 (SVLKLTTFSIPSLLYTLFSTSLTVT). Residues 72–92 (MNATTLMLIIVLVFSLVSWFV) form a helical membrane-spanning segment. Over 93–1503 (RYRYLNMYSR…RTMAPRRASI (1411 aa)) the chain is Cytoplasmic. Disordered regions lie at residues 252–348 (RHGG…TTSV), 454–561 (TKGI…SNPF), and 722–745 (KNESSLNIGPGNQQGSAGRDRFMD). 6 stretches are compositionally biased toward polar residues: residues 262–272 (TSATETYTSSR), 285–302 (STVSVPTTPQLERSSSHG), 487–496 (QRPSSVTASP), 506–542 (KHTSNSGDLLMNIQLSRNGGRRSTSNMDPLTRQSTLL), 552–561 (PLSQRTSNPF), and 723–737 (NESSLNIGPGNQQGS). A nucleoside 3',5'-cyclic phosphate contacts are provided by residues 658 to 777 (GLPV…GYVG) and 821 to 941 (RLTN…IASR). The PNPLA domain occupies 1200–1364 (LVLGGGGARG…IDNLTVSHMK (165 aa)). A GXGXXG motif is present at residues 1204 to 1209 (GGGARG). A GXSXG motif is present at residues 1231-1235 (GTSIG). The active-site Nucleophile is S1233. D1351 acts as the Proton acceptor in catalysis. A DGA/G motif is present at residues 1351–1353 (DGG).

Belongs to the NTE family.

The protein localises to the endoplasmic reticulum membrane. The enzyme catalyses a 1-acyl-sn-glycero-3-phosphocholine + H2O = sn-glycerol 3-phosphocholine + a fatty acid + H(+). With respect to regulation, inhibited by organophosphorus esters. Functionally, intracellular phospholipase B that catalyzes the double deacylation of phosphatidylcholine (PC) to glycerophosphocholine (GroPCho). Plays an important role in membrane lipid homeostasis. Responsible for the rapid PC turnover in response to inositol, elevated temperatures, or when choline is present in the growth medium. The polypeptide is Lysophospholipase NTE1 (NTE1) (Pyricularia oryzae (strain 70-15 / ATCC MYA-4617 / FGSC 8958) (Rice blast fungus)).